The chain runs to 315 residues: Ankyrin repeat domain-containing protein SOWAHD (315 aa).

The tract at residues Met-1–Leu-39 is disordered. ANK repeat units lie at residues Pro-112 to Leu-141, Thr-147 to Glu-162, and Gly-186 to Arg-216.

It belongs to the SOWAH family.

This is Ankyrin repeat domain-containing protein SOWAHD (SOWAHD) from Homo sapiens (Human).